Here is a 2813-residue protein sequence, read N- to C-terminus: A-kinase anchor protein 13 (2813 aa).

Disordered regions lie at residues 304-400 (AQDP…QDSC) and 415-439 (LSSC…QESL). A compositionally biased stretch (polar residues) spans 427 to 439 (TKSSGMPTDQESL). The tract at residues 494-516 (WKNVLQGGESTKERFENSNIGTA) is important for interaction with PRKAR2A. Disordered stretches follow at residues 539–585 (AASS…VDQN), 632–653 (HQNS…SPIC), and 690–726 (SEST…RDTQ). The span at 561 to 577 (STEKTAETETSRSREES) shows a compositional bias: basic and acidic residues. A compositionally biased stretch (polar residues) spans 690-702 (SESTTARQPSSQD). Residue Ser790 is modified to Phosphoserine. Disordered stretches follow at residues 805–856 (VPSQ…AAEL) and 939–965 (ENAL…QFHE). At Thr815 the chain carries Phosphothreonine. Basic and acidic residues predominate over residues 835–844 (PDTRPLEDRA). 2 stretches are compositionally biased toward polar residues: residues 847–856 (LSTSSTAAEL) and 939–948 (ENALSSGTLQ). Thr953 bears the Phosphothreonine mark. Residue Ser983 is modified to Phosphoserine. Disordered regions lie at residues 1431–1455 (GVLK…DSII) and 1467–1542 (DITG…DSIT). Residues 1467 to 1478 (DITGSSSSTDDT) are compositionally biased toward low complexity. Residues 1488-1497 (GSDVSLSQIL) show a composition bias toward polar residues. Residues Ser1489, Ser1507, Ser1540, Ser1565, and Ser1602 each carry the phosphoserine modification. A compositionally biased stretch (acidic residues) spans 1525–1540 (SEPADPGDVEEEEMDS). The important for interaction with MAP2K3 stretch occupies residues 1585–1715 (RVLGDVVRRP…HSTFHNTSAN (131 aa)). The tract at residues 1601 to 1638 (FSLEGLTGGAGVGNKPSSSLEVSSANAEELRHPFSGEE) is disordered. A compositionally biased stretch (polar residues) spans 1615–1626 (KPSSSLEVSSAN). Over residues 1628–1638 (EELRHPFSGEE) the composition is skewed to basic and acidic residues. Ser1642, Ser1645, and Ser1647 each carry phosphoserine. At Lys1670 the chain carries N6-methyllysine. The segment at 1755-1793 (KMSSSKKSKEKEKEKDKIKEKEKDSKDKEKDKKTVNGHT) is disordered. A coiled-coil region spans residues 1758 to 1790 (SSKKSKEKEKEKDKIKEKEKDSKDKEKDKKTVN). The segment covering 1761–1788 (KSKEKEKEKDKIKEKEKDSKDKEKDKKT) has biased composition (basic and acidic residues). The segment at 1791–1838 (GHTFSSIPVVGPISCSQCMKPFTNKDAYTCANCSAFVHKGCRESLASC) adopts a Phorbol-ester/DAG-type zinc-finger fold. Ser1876, Ser1895, and Ser1929 each carry phosphoserine. Residues 1919–2813 (MSNTWKFLSH…VSAEGEEIFC (895 aa)) are interaction with ESR1. Thr1930 carries the phosphothreonine modification. Ser1932 and Ser1945 each carry phosphoserine. A DH domain is found at 1994–2191 (KRQEVIYELM…KDVIGAVDSK (198 aa)). Positions 2231–2333 (KLVRDGSVFL…WIQIIQDTIN (103 aa)) constitute a PH domain. 2 positions are modified to phosphoserine: Ser2345 and Ser2398. Residues 2345 to 2381 (SENEEEKKMLDTRARELKEQLHQKDQKILLLLEEKEM) adopt a coiled-coil conformation. The interval 2466 to 2502 (ETFGGFDSHQMNASKGGEKEEGDDGQDLRRTESDSGL) is disordered. A Phosphothreonine modification is found at Thr2467. Position 2473 is a phosphoserine (Ser2473). Residues 2491–2502 (QDLRRTESDSGL) are compositionally biased toward basic and acidic residues. Phosphoserine occurs at positions 2563 and 2566. The stretch at 2568 to 2683 (LIEQEKQRSL…RLSQRQTERD (116 aa)) forms a coiled coil. Basic and acidic residues predominate over residues 2665-2684 (QEQLRREAERLSQRQTERDL). The tract at residues 2665 to 2813 (QEQLRREAER…VSAEGEEIFC (149 aa)) is disordered. Phosphoserine occurs at positions 2703, 2709, and 2728. Residues 2720-2735 (SLDSELSVSPKRNSIS) are compositionally biased toward polar residues. Residues 2760-2771 (QSQAPASTSAST) show a composition bias toward low complexity.

Interacts with the cAMP-dependent protein kinase (PKA) holoenzyme and with the regulatory subunit PRKAR2A. Interacts with RHOA. Also interacts with RHOB and RHOC. Identified in a ternary complex with RHOA and PRKAR2A. Identified in a complex with NR3C1 and RHOA. Interacts with BRAF and KSR1. Identified in a complex with BRAF and KSR1. Component of a signaling complex containing at least AKAP13, PKN1, MAPK14, ZAK and MAP2K3. Within this complex, AKAP13 interacts directly with PKN1, which in turn recruits MAPK14, MAP2K3 and ZAK. Interacts (phosphorylated form) with YWHAB and YWHAZ. Interaction with YWHAB inhibits activation of RHOA, interferes with PKN1 binding and activation of MAP kinases. Interacts with GNA12. Interacts with IKBKB. Interacts with ESR1, THRA, PPARA and NME2. Interacts (via the C-terminal domain after the PH domain) with MEF2C and RXRB. Interacts (via the C-terminal domain after the PH domain) with PRKD1. As to expression, detected in mammary gland. Detected in heart (at protein level). Expressed as a 5.3 kb transcript in hematopoietic cells, skeletal muscle, lung, heart, estrogen-responsive reproductive tissues, including breast ductal epithelium. Also found in testis and breast cancer cell lines. Predominantly expressed as a 10 kb transcript in the heart and at lower levels in the lung, placenta, kidney, pancreas, skeletal muscle and liver. Transcripts of between 6-9 kb are also expressed in myeloid and lymphoid lineages, a variety of epithelial tissues, and in skeletal muscle.

The protein resides in the cytoplasm. Its subcellular location is the cytosol. The protein localises to the cell cortex. It is found in the nucleus. It localises to the membrane. Its function is as follows. Scaffold protein that plays an important role in assembling signaling complexes downstream of several types of G protein-coupled receptors. Activates RHOA in response to signaling via G protein-coupled receptors via its function as Rho guanine nucleotide exchange factor. May also activate other Rho family members. Part of a kinase signaling complex that links ADRA1A and ADRA1B adrenergic receptor signaling to the activation of downstream p38 MAP kinases, such as MAPK11 and MAPK14. Part of a signaling complex that links ADRA1B signaling to the activation of RHOA and IKBKB/IKKB, leading to increased NF-kappa-B transcriptional activity. Part of a RHOA-dependent signaling cascade that mediates responses to lysophosphatidic acid (LPA), a signaling molecule that activates G-protein coupled receptors and potentiates transcriptional activation of the glucocorticoid receptor NR3C1. Part of a signaling cascade that stimulates MEF2C-dependent gene expression in response to lysophosphatidic acid (LPA). Part of a signaling pathway that activates MAPK11 and/or MAPK14 and leads to increased transcription activation of the estrogen receptors ESR1 and ESR2. Part of a signaling cascade that links cAMP and EGFR signaling to BRAF signaling and to PKA-mediated phosphorylation of KSR1, leading to the activation of downstream MAP kinases, such as MAPK1 or MAPK3. Functions as a scaffold protein that anchors cAMP-dependent protein kinase (PKA) and PRKD1. This promotes activation of PRKD1, leading to increased phosphorylation of HDAC5 and ultimately cardiomyocyte hypertrophy. Has no guanine nucleotide exchange activity on CDC42, Ras or Rac. Required for normal embryonic heart development, and in particular for normal sarcomere formation in the developing cardiomyocytes. Plays a role in cardiomyocyte growth and cardiac hypertrophy in response to activation of the beta-adrenergic receptor by phenylephrine or isoproterenol. Required for normal adaptive cardiac hypertrophy in response to pressure overload. Plays a role in osteogenesis. The sequence is that of A-kinase anchor protein 13 (AKAP13) from Homo sapiens (Human).